The chain runs to 673 residues: Probable lysophospholipase 4 (673 aa).

The N-terminal stretch at 1-19 (MYVNYIGLFAFVQISLTLA) is a signal peptide. N-linked (GlcNAc...) asparagine glycosylation is found at N72, N125, N191, N194, N272, N301, N374, N404, N409, N481, N516, N545, and N574. Residues 74–615 (TCSNDNLLRP…QEYCWDGTLA (542 aa)) form the PLA2c domain. The segment at 631 to 653 (TTSRAPSGTTSGTASSTTSSSVA) is disordered.

This sequence belongs to the lysophospholipase family.

The protein localises to the secreted. The catalysed reaction is a 1-acyl-sn-glycero-3-phosphocholine + H2O = sn-glycerol 3-phosphocholine + a fatty acid + H(+). In terms of biological role, catalyzes the release of fatty acids from lysophospholipids. This Schizosaccharomyces pombe (strain 972 / ATCC 24843) (Fission yeast) protein is Probable lysophospholipase 4 (plb4).